The sequence spans 220 residues: Protein-L-isoaspartate O-methyltransferase (220 aa).

S64 is a catalytic residue.

The protein belongs to the methyltransferase superfamily. L-isoaspartyl/D-aspartyl protein methyltransferase family.

Its subcellular location is the cytoplasm. The catalysed reaction is [protein]-L-isoaspartate + S-adenosyl-L-methionine = [protein]-L-isoaspartate alpha-methyl ester + S-adenosyl-L-homocysteine. Functionally, catalyzes the methyl esterification of L-isoaspartyl residues in peptides and proteins that result from spontaneous decomposition of normal L-aspartyl and L-asparaginyl residues. It plays a role in the repair and/or degradation of damaged proteins. This Thermococcus onnurineus (strain NA1) protein is Protein-L-isoaspartate O-methyltransferase.